Reading from the N-terminus, the 630-residue chain is Sodium-dependent serotonin transporter (630 aa).

Residues 1–87 (METTPLNSQK…ERETWGKKVD (87 aa)) are Cytoplasmic-facing. The tract at residues 31-59 (VPTPGDKVESGQISNGYSAVPSPGAGDDT) is disordered. Tyr-47 carries the post-translational modification Phosphotyrosine. A helical membrane pass occupies residues 88–112 (FLLSVIGYAVDLGNVWRFPYICYQN). Residues Gly-94, Ala-96, Val-97, Asp-98, and Asn-101 each contribute to the Na(+) site. Asp-98 is a binding site for serotonin. Residues 113–115 (GGG) lie on the Extracellular side of the membrane. Residues 116–135 (AFLIPYTIMAIFGGIPLFYM) form a helical membrane-spanning segment. Residues 136–160 (ELALGQYHRNGCISIWRKICPIFKG) lie on the Cytoplasmic side of the membrane. Tyr-142 is subject to Phosphotyrosine. Residues 161 to 186 (IGYAICIIAFYIASYYNTIMAWALYY) traverse the membrane as a helical segment. At 187–252 (LISSFTDQLP…KGLQDLGGIS (66 aa)) the chain is on the extracellular side. Cys-200 and Cys-209 are joined by a disulfide. N-linked (GlcNAc...) asparagine glycosylation is found at Asn-208 and Asn-217. Residues 253–271 (WQLALCIMLIFTVIYFSIW) traverse the membrane as a helical segment. The Cytoplasmic segment spans residues 272 to 277 (KGVKTS). Thr-276 carries the phosphothreonine modification. A helical membrane pass occupies residues 278–297 (GKVVWVTATFPYIILSVLLV). Residues 298 to 324 (RGATLPGAWRGVLFYLKPNWQKLLETG) are Extracellular-facing. A helical transmembrane segment spans residues 325–347 (VWIDAAAQIFFSLGPGFGVLLAF). Ser-336 contacts Na(+). Residues 348–360 (ASYNKFNNNCYQD) are Cytoplasmic-facing. The helical transmembrane segment at 361-380 (ALVTSVVNCMTSFVSGFVIF) threads the bilayer. Position 368 (Asn-368) interacts with Na(+). Residues 381–421 (TVLGYMAEMRNEDVSEVAKDAGPSLLFITYAEAIANMPAST) are Extracellular-facing. A helical transmembrane segment spans residues 422–443 (FFAIIFFLMLITLGLDSTFAGL). Na(+) contacts are provided by Leu-434, Asp-437, and Ser-438. Residue Thr-439 coordinates serotonin. Residues 444 to 463 (EGVITAVLDEFPHIWAKRRE) lie on the Cytoplasmic side of the membrane. Residues 464 to 483 (WFVLAVVITCFFGSLVTLTF) form a helical membrane-spanning segment. The Extracellular portion of the chain corresponds to 484-494 (GGAYVVKLLEE). Serotonin contacts are provided by Glu-494 and Tyr-495. Residues 495–516 (YATGPAVLTVALIEAVAVSWFY) traverse the membrane as a helical segment. At 517 to 538 (GITQFCRDVKEMLGFSPGWFWR) the chain is on the cytoplasmic side. The chain crosses the membrane as a helical span at residues 539–558 (ICWVAISPLFLLFIICSFLM). Serotonin-binding residues include Phe-556 and Ser-559. The Extracellular segment spans residues 559–574 (SPPQLRLFQYNYPHWS). Residues 575–595 (IILGYCIGTSSFVCIPTYIAY) form a helical membrane-spanning segment. The Cytoplasmic portion of the chain corresponds to 596–630 (RLISTPGTFKERIIKSITPETPTEIPCGDVRLNAV). Residues 616 to 624 (TPTEIPCGD) are interaction with RAB4A.

This sequence belongs to the sodium:neurotransmitter symporter (SNF) (TC 2.A.22) family. SLC6A4 subfamily. Monomer or homooligomer. Interacts (via C-terminus) with SCAMP2; the interaction is direct and retains transporter molecules intracellularly. Interacts with filamentous actin and STX1A. Interacts (via the N-terminus) with STX1A (via the H3 domain); this interaction regulates SLC4A6 channel conductance. Interacts with SEC23A, SEC24C and PATJ. Interacts with NOS1; the interaction may diminish the cell surface localization of SERT in the brain and, correspondingly, reduce serotonin reuptake. Interacts with TGFB1I1. Interacts with ITGAV:ITGB3. Interacts (via C-terminus) with ITGB3; this interaction regulates SLC6A4 trafficking. Post-translationally, phosphorylation at Thr-276 increases 5-HT uptake and is required for cGMP-mediated SERT regulation.

The protein resides in the cell membrane. The protein localises to the endomembrane system. Its subcellular location is the endosome membrane. It is found in the synapse. It localises to the cell junction. The protein resides in the focal adhesion. The protein localises to the cell projection. Its subcellular location is the neuron projection. The catalysed reaction is serotonin(out) + K(+)(in) + Na(+)(out) + H(+)(in) = serotonin(in) + K(+)(out) + Na(+)(in) + H(+)(out). Serotonin transporter that cotransports serotonin with one Na(+) ion in exchange for one K(+) ion and possibly one proton in an overall electroneutral transport cycle. Transports serotonin across the plasma membrane from the extracellular compartment to the cytosol thus limiting serotonin intercellular signaling. Essential for serotonin homeostasis in the central nervous system. In the developing somatosensory cortex, acts in glutamatergic neurons to control serotonin uptake and its trophic functions accounting for proper spatial organization of cortical neurons and elaboration of sensory circuits. In the mature cortex, acts primarily in brainstem raphe neurons to mediate serotonin uptake from the synaptic cleft back into the pre-synaptic terminal thus terminating serotonin signaling at the synapse. Modulates mucosal serotonin levels in the gastrointestinal tract through uptake and clearance of serotonin in enterocytes. Required for enteric neurogenesis and gastrointestinal reflexes. Regulates blood serotonin levels by ensuring rapid high affinity uptake of serotonin from plasma to platelets, where it is further stored in dense granules via vesicular monoamine transporters and then released upon stimulation. Mechanistically, the transport cycle starts with an outward-open conformation having Na1(+) and Cl(-) sites occupied. The binding of a second extracellular Na2(+) ion and serotonin substrate leads to structural changes to outward-occluded to inward-occluded to inward-open, where the Na2(+) ion and serotonin are released into the cytosol. Binding of intracellular K(+) ion induces conformational transitions to inward-occluded to outward-open and completes the cycle by releasing K(+) possibly together with a proton bound to Asp-98 into the extracellular compartment. Na1(+) and Cl(-) ions remain bound throughout the transport cycle. Additionally, displays serotonin-induced channel-like conductance for monovalent cations, mainly Na(+) ions. The channel activity is uncoupled from the transport cycle and may contribute to the membrane resting potential or excitability. This chain is Sodium-dependent serotonin transporter (SLC6A4), found in Macaca mulatta (Rhesus macaque).